We begin with the raw amino-acid sequence, 202 residues long: AFG2-interacting ribosome maturation factor (202 aa).

As to quaternary structure, part of the 55LCC heterohexameric ATPase complex. Does not associate with pre-60S ribosomal particles.

It is found in the nucleus. The protein resides in the cytoplasm. Functionally, part of the 55LCC heterohexameric ATPase complex which is chromatin-associated and promotes replisome proteostasis to maintain replication fork progression and genome stability. Required for replication fork progression, sister chromatid cohesion, and chromosome stability. The ATPase activity is specifically enhanced by replication fork DNA and is coupled to cysteine protease-dependent cleavage of replisome substrates in response to replication fork damage. Uses ATPase activity to process replisome substrates in S-phase, facilitating their proteolytic turnover from chromatin to ensure DNA replication and mitotic fidelity. Involved in the cytoplasmic maturation steps of pre-60S ribosomal particles by promoting the release of shuttling protein RSL24D1/RLP24 from the pre-ribosomal particles. Plays an essential role in early embryonic development. In Danio rerio (Zebrafish), this protein is AFG2-interacting ribosome maturation factor (airim).